The following is a 461-amino-acid chain: Peptidyl-prolyl cis-trans isomerase-like 4 (461 aa).

Residues Met1 to Ile171 enclose the PPIase cyclophilin-type domain. Residues Glu205–Met234 adopt a coiled-coil conformation. The 79-residue stretch at Asn248–Ser326 folds into the RRM domain. Residues Lys341 to Arg461 are disordered. Basic and acidic residues-rich tracts occupy residues Asp365–Ala384 and Ser398–Arg461.

Belongs to the cyclophilin-type PPIase family. PPIL4 subfamily.

The protein localises to the nucleus. The enzyme catalyses [protein]-peptidylproline (omega=180) = [protein]-peptidylproline (omega=0). Its function is as follows. PPIases accelerate the folding of proteins. It catalyzes the cis-trans isomerization of proline imidic peptide bonds in oligopeptides. This is Peptidyl-prolyl cis-trans isomerase-like 4 (cyp6) from Aspergillus oryzae (strain ATCC 42149 / RIB 40) (Yellow koji mold).